Here is a 1023-residue protein sequence, read N- to C-terminus: Sodium/potassium-transporting ATPase subunit alpha-1 (1023 aa).

Residues 1–5 (MGKGV) constitute a propeptide that is removed on maturation. Residues 1 to 11 (MGKGVGRDKYE) show a composition bias toward basic and acidic residues. The disordered stretch occupies residues 1–38 (MGKGVGRDKYEPAAVSEHGDKKSKKAKKERDMDELKKE). Over 6 to 87 (GRDKYEPAAV…NALTPPPTTP (82 aa)) the chain is Cytoplasmic. Lysine 9 bears the N6-acetyllysine mark. Tyrosine 10 bears the Phosphotyrosine mark. A Phosphoserine; by PKC modification is found at serine 16. Lysine 21 carries the post-translational modification N6-acetyllysine. Serine 23 is subject to Phosphoserine; by PKC. The segment covering 28-38 (KERDMDELKKE) has biased composition (basic and acidic residues). A phosphoserine mark is found at serine 40 and serine 47. The segment at 82 to 84 (PPP) is phosphoinositide-3 kinase binding. Residues 88 to 108 (EWVKFCRQLFGGFSMLLWIGA) form a helical membrane-spanning segment. Residues 109-131 (ILCFLAYGIRSATEEEPPNDDLY) lie on the Extracellular side of the membrane. Residues 132-152 (LGVVLSAVVIITGCFSYYQEA) form a helical membrane-spanning segment. At 153–288 (KSSKIMESFK…GGQTPIAEEI (136 aa)) the chain is on the cytoplasmic side. Positions 216 to 235 (SSLTGESEPQTRSPDFTNEN) are disordered. Phosphoserine is present on serine 228. Tyrosine 260 is modified (phosphotyrosine). The helical transmembrane segment at 289–308 (EHFIHLITGVAVFLGVSFFI) threads the bilayer. Residues 309 to 320 (LSLILEYTWLEA) are Extracellular-facing. The helical transmembrane segment at 321–338 (VIFLIGIIVANVPEGLLA) threads the bilayer. The Cytoplasmic portion of the chain corresponds to 339 to 772 (TVTVCLTLTA…EEGRLIFDNL (434 aa)). The active-site 4-aspartylphosphate intermediate is aspartate 376. Phosphoserine is present on residues serine 452 and serine 484. An ATP-binding site is contributed by lysine 487. Phosphotyrosine is present on tyrosine 542. Positions 596 to 717 (RAAVPDAVGK…QGAIVAVTGD (122 aa)) are mediates interaction with SCN7A. Residue lysine 661 is modified to N6-succinyllysine. Serine 668 and serine 675 each carry phosphoserine. Mg(2+) contacts are provided by aspartate 717 and aspartate 721. Residues 773-792 (KKSIAYTLTSNIPEITPFLI) traverse the membrane as a helical segment. Residues 793-802 (FIIANIPLPL) are Extracellular-facing. The helical transmembrane segment at 803-823 (GTVTILCIDLGTDMVPAISLA) threads the bilayer. Residues 824–843 (YEQAESDIMKRQPRNPKTDK) lie on the Cytoplasmic side of the membrane. Residues 844 to 866 (LVNERLISMAYGQIGMIQALGGF) form a helical membrane-spanning segment. Topologically, residues 867-918 (FTYFVILAENGFLPFHLLGIRETWDDRWINDVEDSYGQQWTYEQRKIVEFTC) are extracellular. A helical membrane pass occupies residues 919 to 938 (HTAFFVSIVVVQWADLVICK). The Cytoplasmic segment spans residues 939 to 951 (TRRNSVFQQGMKN). A Phosphoserine; by PKA modification is found at serine 943. The chain crosses the membrane as a helical span at residues 952–970 (KILIFGLFEETALAAFLSY). Topologically, residues 971 to 985 (CPGMGAALRMYPLKP) are extracellular. Residues 986–1006 (TWWFCAFPYSLLIFVYDEVRK) form a helical membrane-spanning segment. Topologically, residues 1007-1023 (LIIRRRPGGWVEKETYY) are cytoplasmic.

The protein belongs to the cation transport ATPase (P-type) (TC 3.A.3) family. Type IIC subfamily. The sodium/potassium-transporting ATPase is composed of a catalytic alpha subunit, an auxiliary non-catalytic beta subunit and an additional regulatory subunit. Interacts with regulatory subunit FXYD1. Interacts with regulatory subunit FXYD3. Interacts with SLC35G1 and STIM1. Interacts with SIK1. Interacts with CLN3; this interaction regulates the sodium/potassium-transporting ATPase complex localization at the plasma membrane. Interacts with SCN7A; activates ATP1A1 P-type sodium:potassium-exchanging transporter activity which indirectly signals to nearby neurons to regulate sodium homeostasis. Post-translationally, phosphorylation on Tyr-10 modulates pumping activity. Phosphorylation of Ser-943 by PKA modulates the response of ATP1A1 to PKC. Dephosphorylation by protein phosphatase 2A (PP2A) following increases in intracellular sodium, leading to increase catalytic activity. In terms of tissue distribution, expressed in the central nervous system, in most motor and sensory axons of the ventral and dorsal roots, as well as in the large motor neurons of the ventral horn (at protein level).

It is found in the cell membrane. The protein localises to the basolateral cell membrane. It localises to the sarcolemma. Its subcellular location is the cell projection. The protein resides in the axon. It is found in the melanosome. The catalysed reaction is K(+)(out) + Na(+)(in) + ATP + H2O = K(+)(in) + Na(+)(out) + ADP + phosphate + H(+). This is the catalytic component of the active enzyme, which catalyzes the hydrolysis of ATP coupled with the exchange of sodium and potassium ions across the plasma membrane. This action creates the electrochemical gradient of sodium and potassium ions, providing the energy for active transport of various nutrients. Could also be part of an osmosensory signaling pathway that senses body-fluid sodium levels and controls salt intake behavior as well as voluntary water intake to regulate sodium homeostasis. In Rattus norvegicus (Rat), this protein is Sodium/potassium-transporting ATPase subunit alpha-1 (Atp1a1).